The primary structure comprises 510 residues: uncharacterized protein (510 aa).

The Lumenal portion of the chain corresponds to 1–89; the sequence is MTSSLDDIEP…QGQRKKVLLK (89 aa). A disordered region spans residues 38–76; sequence AVSQGVPDMDGQTTDSSKDPEPNSEDKKAFPPSSGSFFS. Residues 53-66 show a composition bias toward basic and acidic residues; sequence SSKDPEPNSEDKKA. Over residues 67 to 76 the composition is skewed to low complexity; that stretch reads FPPSSGSFFS. A helical membrane pass occupies residues 90–110; the sequence is FVFTNCLLAIICFTMFVLFWG. Residues 111–123 are Cytoplasmic-facing; the sequence is ALYDTSKYLHKVK. The helical transmembrane segment at 124–144 threads the bilayer; that stretch reads LLVVIQEPPVVILDNNSSMVV. The Lumenal portion of the chain corresponds to 145-312; it reads PSISYALPTF…TDRILLAPTQ (168 aa). A helical membrane pass occupies residues 313-333; that stretch reads IGVVYCLLLTFFQFLLYGPLH. The Cytoplasmic segment spans residues 334-349; that stretch reads VEMAKVLRPANGLIYR. A helical transmembrane segment spans residues 350-370; that stretch reads IAMSWFTFFFASLFFCTTTAI. Residues 371-381 are Lumenal-facing; it reads FQVDFTKSFGR. Residues 382 to 402 form a helical membrane-spanning segment; that stretch reads GGFVVYWMSTWLFMLAAGGAN. The Cytoplasmic portion of the chain corresponds to 403–416; that stretch reads ENAVMLVITLGPQY. The chain crosses the membrane as a helical span at residues 417–437; that stretch reads LGFWILSFVILNIAPSFFPLA. At 438–474 the chain is on the lumenal side; the sequence is LNNNVYRYGYMMPVHNVIDIYRVIFFDVTRRKMGRNY. A helical transmembrane segment spans residues 475–495; that stretch reads GILVALIALNTALLPFVGKYA. At 496-510 the chain is on the cytoplasmic side; it reads SRKLKQKALVAAKQS.

To yeast SNG1.

The protein resides in the endoplasmic reticulum membrane. This is an uncharacterized protein from Saccharomyces cerevisiae (strain ATCC 204508 / S288c) (Baker's yeast).